A 318-amino-acid chain; its full sequence is NADH-ubiquinone oxidoreductase chain 1 (318 aa).

8 helical membrane passes run 2-22, 69-89, 100-120, 146-166, 171-191, 223-243, 253-273, and 294-314; these read FMINVLSLIIPILLAVAFLTL, LMFIMAPILALTLALTMWIPL, LGVLFMLAMSSLAVYSILWSG, LAIILLSVLLMNGSFTLAMLI, YMWLIIPAWPLAMMWFISTLA, FFLAEYANIIMMNILTTILFF, ELYTINFTVKTLLLTTTFLWI, and LPLTLALCMWHVSLPIITASI.

It belongs to the complex I subunit 1 family. As to quaternary structure, core subunit of respiratory chain NADH dehydrogenase (Complex I) which is composed of 45 different subunits.

The protein resides in the mitochondrion inner membrane. The enzyme catalyses a ubiquinone + NADH + 5 H(+)(in) = a ubiquinol + NAD(+) + 4 H(+)(out). Its function is as follows. Core subunit of the mitochondrial membrane respiratory chain NADH dehydrogenase (Complex I) which catalyzes electron transfer from NADH through the respiratory chain, using ubiquinone as an electron acceptor. Essential for the catalytic activity and assembly of complex I. This Felis catus (Cat) protein is NADH-ubiquinone oxidoreductase chain 1 (MT-ND1).